A 585-amino-acid chain; its full sequence is Tyramine beta-hydroxylase (585 aa).

The N-terminal stretch at 1 to 21 is a signal peptide; it reads MKCANAAALLFFVLCDIGVHG. The DOMON domain maps to 31–142; the sequence is SNVTVKWQTD…GTTQFYIAAS (112 aa). Asn32 and Asn71 each carry an N-linked (GlcNAc...) asparagine glycan. The active site involves Tyr206. 2 disulfide bridges follow: Cys208–Cys258 and Cys247–Cys270. Cu(2+) contacts are provided by His240 and His241. His308, His386, and His388 together coordinate Cu(2+). 3 cysteine pairs are disulfide-bonded: Cys365-Cys477, Cys369-Cys534, and Cys440-Cys462. Residue His386 is part of the active site. N-linked (GlcNAc...) asparagine glycosylation is present at Asn449. Met461 is a Cu(2+) binding site. A glycan (N-linked (GlcNAc...) asparagine) is linked at Asn483.

Belongs to the copper type II ascorbate-dependent monooxygenase family. It depends on Cu(2+) as a cofactor.

Its subcellular location is the cytoplasmic vesicle. It localises to the secretory vesicle. The protein localises to the synaptic vesicle. The enzyme catalyses tyramine + L-ascorbate + O2 = (R)-octopamine + L-dehydroascorbate + H2O. Functionally, catalyzes the hydroxylation of tyramine into octopamine, a neurotransmitter involved in pharyngeal pumping and egg laying. The chain is Tyramine beta-hydroxylase (tbh-1) from Caenorhabditis briggsae.